Here is a 299-residue protein sequence, read N- to C-terminus: GTPase Era (299 aa).

The region spanning 4–171 (KSGFVAILGR…VDILSENLGE (168 aa)) is the Era-type G domain. Positions 12-19 (GRPNVGKS) are G1. 12-19 (GRPNVGKS) contributes to the GTP binding site. The tract at residues 38–42 (QTTRN) is G2. The G3 stretch occupies residues 59-62 (DTPG). GTP contacts are provided by residues 59–63 (DTPGI) and 121–124 (NKID). The segment at 121 to 124 (NKID) is G4. The G5 stretch occupies residues 150 to 152 (ISA). Positions 202-280 (TREEIPHSVA…FLETWVKVKK (79 aa)) constitute a KH type-2 domain.

This sequence belongs to the TRAFAC class TrmE-Era-EngA-EngB-Septin-like GTPase superfamily. Era GTPase family. As to quaternary structure, monomer.

It localises to the cytoplasm. Its subcellular location is the cell membrane. Functionally, an essential GTPase that binds both GDP and GTP, with rapid nucleotide exchange. Plays a role in 16S rRNA processing and 30S ribosomal subunit biogenesis and possibly also in cell cycle regulation and energy metabolism. This is GTPase Era from Streptococcus pneumoniae (strain JJA).